Reading from the N-terminus, the 578-residue chain is Longifolene synthase (578 aa).

3 residues coordinate Mg(2+): Asp331, Asp335, and Asp475. Residues 331 to 335 (DDLYD) carry the DDXXD motif motif.

Belongs to the terpene synthase family. Tpsd subfamily. The cofactor is Mg(2+). Mn(2+) serves as cofactor.

The protein resides in the cytoplasm. The enzyme catalyses (2E,6E)-farnesyl diphosphate = longifolene + diphosphate. The protein operates within sesquiterpene biosynthesis. Its pathway is terpene metabolism; oleoresin biosynthesis. Involved in defensive oleoresin formation in conifers in response to insect attack or other injury. Involved in sesquiterpene (C15) olefins biosynthesis. Produces mainly longifolene, but also multiple minor products including alpha-longipinene, alpha-longicyclene, E-beta-farnesene, longiborneol, cyclosativene, beta-longipinene, and 12 other sesquiterpenes when used with farnesyl diphosphate (FPP) as substrate. In Picea abies (Norway spruce), this protein is Longifolene synthase (TPS-Lon).